The chain runs to 309 residues: Aspartate carbamoyltransferase catalytic subunit (309 aa).

2 residues coordinate carbamoyl phosphate: R57 and T58. K86 is a binding site for L-aspartate. Positions 107, 135, and 138 each coordinate carbamoyl phosphate. Residues R168 and R229 each coordinate L-aspartate. Carbamoyl phosphate contacts are provided by L269 and P270.

The protein belongs to the aspartate/ornithine carbamoyltransferase superfamily. ATCase family. In terms of assembly, heterooligomer of catalytic and regulatory chains.

It carries out the reaction carbamoyl phosphate + L-aspartate = N-carbamoyl-L-aspartate + phosphate + H(+). The protein operates within pyrimidine metabolism; UMP biosynthesis via de novo pathway; (S)-dihydroorotate from bicarbonate: step 2/3. Catalyzes the condensation of carbamoyl phosphate and aspartate to form carbamoyl aspartate and inorganic phosphate, the committed step in the de novo pyrimidine nucleotide biosynthesis pathway. This Methanopyrus kandleri (strain AV19 / DSM 6324 / JCM 9639 / NBRC 100938) protein is Aspartate carbamoyltransferase catalytic subunit.